A 338-amino-acid polypeptide reads, in one-letter code: MIEIEKVCVDFTAGRGTSTRAVDDVSLHIAAGEIFGIVGTSGAGKSTLLRTLNALTRPSQGRVNVNGVEISALDGKALRQARQRIGIIFQHFNLMHTRTVAQNVAFSLKAAGWERSKIAPRVAEILTLVGLADKANRFPVQLSGGQKQRVGIARAIANHPDVLLCDEPTSALDLETSATILALLRQINAQLGITIVLITHEMNVIKSICDRVAVMSGGKVVESGEVFDVFAHPQHAFTQQLVSHTLNLTLPERLREHLPGQLLKILFIGDSAEQPVLSEVAIKFGVAVNILHGKIEYIGERALGILVVQLTAPHNPTAVAAAVEHIRQRTAQVEVIRG.

An ABC transporter domain is found at 2-242; that stretch reads IEIEKVCVDF…PQHAFTQQLV (241 aa). 39 to 46 contributes to the ATP binding site; that stretch reads GTSGAGKS.

This sequence belongs to the ABC transporter superfamily. Methionine importer (TC 3.A.1.24) family. As to quaternary structure, the complex is composed of two ATP-binding proteins (MetN), two transmembrane proteins (MetI) and a solute-binding protein (MetQ).

It is found in the cell inner membrane. The catalysed reaction is L-methionine(out) + ATP + H2O = L-methionine(in) + ADP + phosphate + H(+). The enzyme catalyses D-methionine(out) + ATP + H2O = D-methionine(in) + ADP + phosphate + H(+). Its function is as follows. Part of the ABC transporter complex MetNIQ involved in methionine import. Responsible for energy coupling to the transport system. The sequence is that of Methionine import ATP-binding protein MetN 2 from Salmonella choleraesuis (strain SC-B67).